The primary structure comprises 202 residues: Small ribosomal subunit protein uS4c (202 aa).

In terms of domain architecture, S4 RNA-binding spans 90–152 (MRLDNVIFRL…RKSESIINKN (63 aa)).

Belongs to the universal ribosomal protein uS4 family. In terms of assembly, part of the 30S ribosomal subunit. Contacts protein S5. The interaction surface between S4 and S5 is involved in control of translational fidelity.

It is found in the plastid. The protein localises to the chloroplast. Its function is as follows. One of the primary rRNA binding proteins, it binds directly to 16S rRNA where it nucleates assembly of the body of the 30S subunit. In terms of biological role, with S5 and S12 plays an important role in translational accuracy. The sequence is that of Small ribosomal subunit protein uS4c (rps4) from Dendrohypopterygium filiculiforme (Moss).